Here is a 421-residue protein sequence, read N- to C-terminus: F-box/kelch-repeat protein At1g26930 (421 aa).

The disordered stretch occupies residues Thr-54–Pro-73. Positions Thr-70–Leu-117 constitute an F-box domain. Kelch repeat units follow at residues Leu-114 to Gly-167, Asp-169 to Glu-212, Ile-213 to Gly-260, Lys-261 to Ala-312, and Ala-320 to Phe-366.

This chain is F-box/kelch-repeat protein At1g26930, found in Arabidopsis thaliana (Mouse-ear cress).